Consider the following 1342-residue polypeptide: DNA-directed RNA polymerase subunit beta (1342 aa).

The protein belongs to the RNA polymerase beta chain family. As to quaternary structure, the RNAP catalytic core consists of 2 alpha, 1 beta, 1 beta' and 1 omega subunit. When a sigma factor is associated with the core the holoenzyme is formed, which can initiate transcription.

The catalysed reaction is RNA(n) + a ribonucleoside 5'-triphosphate = RNA(n+1) + diphosphate. Functionally, DNA-dependent RNA polymerase catalyzes the transcription of DNA into RNA using the four ribonucleoside triphosphates as substrates. This Wigglesworthia glossinidia brevipalpis protein is DNA-directed RNA polymerase subunit beta.